The primary structure comprises 179 residues: Peptidyl-prolyl cis-trans isomerase H (179 aa).

The region spanning 16 to 178 is the PPIase cyclophilin-type domain; it reads FFDISIGDTP…LQVRIAECGE (163 aa).

This sequence belongs to the cyclophilin-type PPIase family. PPIase H subfamily.

The protein localises to the nucleus. It carries out the reaction [protein]-peptidylproline (omega=180) = [protein]-peptidylproline (omega=0). Its function is as follows. PPIases accelerate the folding of proteins. It catalyzes the cis-trans isomerization of proline imidic peptide bonds in oligopeptides. The protein is Peptidyl-prolyl cis-trans isomerase H (CYP3) of Cryptococcus neoformans var. neoformans serotype D (strain B-3501A) (Filobasidiella neoformans).